The following is a 608-amino-acid chain: MKVILLKPVQLPMLLLILLKFIMAAKEGKIHVLEFNASSEYTLDKRRVISINGYSATFGPEIRVKSGDTLNLKLTNWICSEEEASKDSDVWKDYCSTALHFHGVVPLANEFDGIPGLTQPTIGYGESYWYNFTIDQSTCGTFWYHSHSSVQYGDGMRGVLIVECDDYDNHVANTINSVRDIETLDDGVVTMKKDKHTKELTDYEVQERIITLSDWYTNWNLDILNDKVLSSTGGTDPKFDGSLINGKSSDGETIKIGFNTEYLLLRIVNSGMSGTQVFHLDGFQLIVLEADGIMIKPFIVQTINLAVGQRYTILVKLKSDTSFIRMINGCNKMMGYITKQWWFYKEGAHLDLPKNPNDVSIEHLPGFTKAELYRDIEPTQEENKKLRTKADPVAVFEFDYAYYKDESTKQKYGTGMYKVNERTFSEYVKDPVRFGFNETYDIVINSLDHMRHPWHMHGHHFQIISLGNKGDGPFHKDVQEGKAWSRYQNDLRHLARTGKAPMVRDSINIAGNSYAVLRINTEMPGKWLLHCHVEWHMMKGLGIVFEVPTTTEDSTKQATTAVLSYPTKEPDPNTVVHTAALEQNKSKVIAVYILIMCAVDAIFYWLLM.

Plastocyanin-like domains follow at residues isoleucine 51–glutamate 163, leucine 243–arginine 374, and glutamate 421–proline 548. Positions 100, 102, 145, and 147 each coordinate Cu cation. Positions 452, 455, 457, 530, 531, 532, and 536 each coordinate Cu cation.

It belongs to the multicopper oxidase family. It depends on Cu cation as a cofactor.

In terms of biological role, could be an iron transport multicopper oxidase, which is required for Fe(2+) high affinity uptake. May be required to oxidize Fe(2+) and release it from the transporter. Essential component of copper-dependent iron transport. Involved in meiotic prophase and synaptonemal complex (SC) assembly. The protein is Putative multicopper oxidase GMC1 (GMC1) of Saccharomyces cerevisiae (strain ATCC 204508 / S288c) (Baker's yeast).